The following is an 830-amino-acid chain: DNA gyrase subunit A (830 aa).

The region spanning 33 to 497 (LPDVRDGLKP…AENDIDIEDL (465 aa)) is the Topo IIA-type catalytic domain. Y121 (O-(5'-phospho-DNA)-tyrosine intermediate) is an active-site residue. The GyrA-box signature appears at 524–530 (QKRGGRG). The interval 805-830 (KDDSEQLEDSEEVSEVHDAEENNSEE) is disordered.

Belongs to the type II topoisomerase GyrA/ParC subunit family. As to quaternary structure, heterotetramer, composed of two GyrA and two GyrB chains. In the heterotetramer, GyrA contains the active site tyrosine that forms a transient covalent intermediate with DNA, while GyrB binds cofactors and catalyzes ATP hydrolysis.

The protein resides in the cytoplasm. It catalyses the reaction ATP-dependent breakage, passage and rejoining of double-stranded DNA.. In terms of biological role, a type II topoisomerase that negatively supercoils closed circular double-stranded (ds) DNA in an ATP-dependent manner to modulate DNA topology and maintain chromosomes in an underwound state. Negative supercoiling favors strand separation, and DNA replication, transcription, recombination and repair, all of which involve strand separation. Also able to catalyze the interconversion of other topological isomers of dsDNA rings, including catenanes and knotted rings. Type II topoisomerases break and join 2 DNA strands simultaneously in an ATP-dependent manner. The polypeptide is DNA gyrase subunit A (Clostridium acetobutylicum (strain ATCC 824 / DSM 792 / JCM 1419 / IAM 19013 / LMG 5710 / NBRC 13948 / NRRL B-527 / VKM B-1787 / 2291 / W)).